The chain runs to 133 residues: Ubiquitin-like FUBI-ribosomal protein eS30 fusion protein (133 aa).

One can recognise a Ubiquitin-like domain in the interval 1 to 74; sequence MQLFVRAQEL…LEVAGRMLGG (74 aa). Lysine 125 bears the N6-succinyllysine mark.

This sequence in the N-terminal section; belongs to the ubiquitin family. In the C-terminal section; belongs to the eukaryotic ribosomal protein eS30 family. Component of the 40S subunit of the ribosome. Post-translationally, FUBI is cleaved from ribosomal protein S30 by the deubiquitinase USP36 before the assembly of ribosomal protein S30 into pre-40S ribosomal particles. FUBI removal from ribosomal protein S30 is a crucial event for the final maturation of pre-40S particles.

The protein localises to the cytoplasm. Its subcellular location is the nucleus. May have pro-apoptotic activity. Functionally, component of the 40S subunit of the ribosome. Contributes to the assembly and function of 40S ribosomal subunits. This Oryctolagus cuniculus (Rabbit) protein is Ubiquitin-like FUBI-ribosomal protein eS30 fusion protein (FAU).